The primary structure comprises 136 residues: Ig heavy chain V-A2 region P-MU-3 (136 aa).

The signal sequence occupies residues 1–19; it reads METGLRWLLLVAVLKGVQC. Position 20 is a pyrrolidone carboxylic acid (glutamine 20). The region spanning 20 to 127 is the Ig-like domain; sequence QSVKESEGGL…ENEFFNAIWG (108 aa).

In Oryctolagus cuniculus (Rabbit), this protein is Ig heavy chain V-A2 region P-MU-3.